Consider the following 162-residue polypeptide: Large ribosomal subunit protein bL17 (162 aa).

Residues K126–E162 are disordered. Residues T146–E155 are compositionally biased toward low complexity.

This sequence belongs to the bacterial ribosomal protein bL17 family. As to quaternary structure, part of the 50S ribosomal subunit. Contacts protein L32.

This Flavobacterium psychrophilum (strain ATCC 49511 / DSM 21280 / CIP 103535 / JIP02/86) protein is Large ribosomal subunit protein bL17.